The chain runs to 360 residues: Photosystem II protein D1 (360 aa).

The next 3 membrane-spanning stretches (helical) occupy residues 30–47 (YVGW…TAAA), 119–134 (HFLI…QWEL), and 143–157 (WICV…AAFA). H119 provides a ligand contact to chlorophyll a. Y127 lines the pheophytin a pocket. [CaMn4O5] cluster is bound by residues D171 and E190. Residues 198 to 219 (FHMAGVAGMFGGSLFSAMHGSL) traverse the membrane as a helical segment. H199 provides a ligand contact to chlorophyll a. A quinone contacts are provided by residues H216 and 265–266 (SF). A Fe cation-binding site is contributed by H216. Position 273 (H273) interacts with Fe cation. A helical transmembrane segment spans residues 275 to 289 (FLAVFPVVCVWLTSM). [CaMn4O5] cluster-binding residues include H333, E334, D343, and A345. A propeptide spanning residues 346-360 (AAESTTVALSAPAIG) is cleaved from the precursor.

Belongs to the reaction center PufL/M/PsbA/D family. PSII is composed of 1 copy each of membrane proteins PsbA, PsbB, PsbC, PsbD, PsbE, PsbF, PsbH, PsbI, PsbJ, PsbK, PsbL, PsbM, PsbT, PsbX, PsbY, Psb30/Ycf12, peripheral proteins PsbO, CyanoQ (PsbQ), PsbU, PsbV and a large number of cofactors. It forms dimeric complexes. The D1/D2 heterodimer binds P680, chlorophylls that are the primary electron donor of PSII, and subsequent electron acceptors. It shares a non-heme iron and each subunit binds pheophytin, quinone, additional chlorophylls, carotenoids and lipids. D1 provides most of the ligands for the Mn4-Ca-O5 cluster of the oxygen-evolving complex (OEC). There is also a Cl(-1) ion associated with D1 and D2, which is required for oxygen evolution. The PSII complex binds additional chlorophylls, carotenoids and specific lipids. serves as cofactor. Tyr-162 forms a radical intermediate that is referred to as redox-active TyrZ, YZ or Y-Z. Post-translationally, C-terminally processed by CtpA; processing is essential to allow assembly of the oxygen-evolving complex and thus photosynthetic growth.

The protein localises to the cellular thylakoid membrane. It carries out the reaction 2 a plastoquinone + 4 hnu + 2 H2O = 2 a plastoquinol + O2. Its function is as follows. Photosystem II (PSII) is a light-driven water:plastoquinone oxidoreductase that uses light energy to abstract electrons from H(2)O, generating O(2) and a proton gradient subsequently used for ATP formation. It consists of a core antenna complex that captures photons, and an electron transfer chain that converts photonic excitation into a charge separation. The D1/D2 (PsbA/PsbD) reaction center heterodimer binds P680, the primary electron donor of PSII as well as several subsequent electron acceptors. This chain is Photosystem II protein D1, found in Prochlorococcus marinus (strain MIT 9301).